The chain runs to 309 residues: S-antigen protein (309 aa).

The first 23 residues, 1 to 23 (MNRILSVSFYLFFLYLYIYKTYG), serve as a signal peptide directing secretion. The disordered stretch occupies residues 52–309 (GKGNKYEDLQ…KSIMNMLILM (258 aa)). Positions 60–86 (LQEEGEGENDDEEHSNSEESDNDEENE) are enriched in acidic residues. The segment covering 93–259 (EAPKSDEAEA…DEAEARKSEA (167 aa)) has biased composition (basic and acidic residues). The tract at residues 97-256 (SDEAEALKSD…RKSDEAEARK (160 aa)) is 20 X 8 AA approximate tandem repeats of A-[RL]-K-S-D-E-A-E. 2 repeat units span residues 257–271 (SEAGTEGPKGTGGPG) and 272–286 (SEAGTEGPKGTGGPG). A 2 X 15 AA tandem repeats of S-E-A-G-T-E-G-P-K-G-T-G-G-P-G region spans residues 257-286 (SEAGTEGPKGTGGPGSEAGTEGPKGTGGPG). Residues 263 to 289 (GPKGTGGPGSEAGTEGPKGTGGPGSGG) are compositionally biased toward gly residues.

The protein resides in the parasitophorous vacuole. In terms of biological role, s antigens are soluble heat-stable proteins present in the sera of some infected individuals. The chain is S-antigen protein from Plasmodium falciparum (isolate NF7 / Ghana).